We begin with the raw amino-acid sequence, 334 residues long: MRFVDEVVIKLQAGKGGNGCVSFRREKYVPRGGPDGGDGGNGGSIYLKADENVNTLIDYRYKREYYAENGRPGEGRNCYGKAGEDLYLVVPVGTSVFNIDTNKKIGEVLQHGQTFKLVSGGKRGIGNTHFKSSTNQAPRKFTLGEEGEYKEVRLELNLLADVALLGLPNAGKSTLIRSVSEATPKVADYPFTTMYPHLGVVKVGVDSFVMADIPGVIEGAAEGAGLGLRFLKHLTRARCVLHVVDICPFNESDPVENYFAVEKELEKYSQELFDKPRFLVINKIDLLADKVEQKCQEFVEQIGYQGNYYTISAAMKKGTDELAKKLNEFLQKQQ.

The 159-residue stretch at 1-159 (MRFVDEVVIK…KEVRLELNLL (159 aa)) folds into the Obg domain. The OBG-type G domain maps to 160–331 (ADVALLGLPN…LAKKLNEFLQ (172 aa)). GTP contacts are provided by residues 166–173 (GLPNAGKS), 191–195 (FTTMY), 212–215 (DIPG), 282–285 (NKID), and 312–314 (SAA). 2 residues coordinate Mg(2+): Ser173 and Thr193.

It belongs to the TRAFAC class OBG-HflX-like GTPase superfamily. OBG GTPase family. As to quaternary structure, monomer. It depends on Mg(2+) as a cofactor.

The protein localises to the cytoplasm. Functionally, an essential GTPase which binds GTP, GDP and possibly (p)ppGpp with moderate affinity, with high nucleotide exchange rates and a fairly low GTP hydrolysis rate. Plays a role in control of the cell cycle, stress response, ribosome biogenesis and in those bacteria that undergo differentiation, in morphogenesis control. The sequence is that of GTPase Obg from Francisella tularensis subsp. tularensis (strain WY96-3418).